The primary structure comprises 248 residues: Ribosomal RNA small subunit methyltransferase G (248 aa).

S-adenosyl-L-methionine is bound by residues Gly85, Phe90, Asp108–Ser110, Ala137–Glu138, and Arg156.

The protein belongs to the methyltransferase superfamily. RNA methyltransferase RsmG family.

The protein localises to the cytoplasm. Its function is as follows. Specifically methylates the N7 position of a guanine in 16S rRNA. The polypeptide is Ribosomal RNA small subunit methyltransferase G (Prochlorococcus marinus (strain NATL1A)).